Reading from the N-terminus, the 369-residue chain is Flagellar P-ring protein (369 aa).

The signal sequence occupies residues 1-24 (MKTLHRCIGVALLALGALAGTAHA).

Belongs to the FlgI family. The basal body constitutes a major portion of the flagellar organelle and consists of four rings (L,P,S, and M) mounted on a central rod.

It localises to the periplasm. The protein resides in the bacterial flagellum basal body. In terms of biological role, assembles around the rod to form the L-ring and probably protects the motor/basal body from shearing forces during rotation. The polypeptide is Flagellar P-ring protein (Ralstonia nicotianae (strain ATCC BAA-1114 / GMI1000) (Ralstonia solanacearum)).